The sequence spans 525 residues: Cytochrome P450 monooxygenase ltmJ (525 aa).

Residues 21-43 (LTWWQTIVSFIIFCIMCSWLPGN) traverse the membrane as a helical segment. N-linked (GlcNAc...) asparagine glycosylation occurs at Asn136. Cys465 contributes to the heme binding site.

It belongs to the cytochrome P450 family. It depends on heme as a cofactor.

The protein localises to the membrane. It functions in the pathway secondary metabolite biosynthesis. Its function is as follows. Cytochrome P450 monooxygenase; part of the gene clusters that mediates the biosynthesis of lolitrems, indole-diterpene mycotoxins that are potent tremorgens in mammals, and are synthesized by clavicipitaceous fungal endophytes in association with their grass hosts. The geranylgeranyl diphosphate (GGPP) synthase ltmG is proposed to catalyze the first step in lolitrem biosynthesis. LtmG catalyzes a series of iterative condensations of isopentenyl diphosphate (IPP) with dimethylallyl diphosphate (DMAPP), geranyl diphosphate (GPP), and farnesyl diphosphate (FPP), to form GGPP. GGPP then condenses with indole-3-glycerol phosphate to form 3-geranylgeranylindole, an acyclic intermediate, to be incorporated into paxilline. Either ltmG or ltmC could be responsible for this step, as both are putative prenyl transferases. The FAD-dependent monooxygenase ltmM then catalyzes the epoxidation of the two terminal alkenes of the geranylgeranyl moiety, which is subsequently cyclized by ltmB, to paspaline. The cytochrome P450 monooxygenases ltmQ and ltmP can sequentially oxidize paspaline to terpendole E and terpendole F. Alternatively, ltmP converts paspaline to an intermediate which is oxidized by ltmQ to terpendole F. LtmF, ltmK, ltmE and ltmJ appear to be unique to the epichloe endophytes. The prenyltransferase ltmF is involved in the 27-hydroxyl-O-prenylation. The cytochrome P450 monooxygenase ltmK is required for the oxidative acetal ring formation. The multi-functional prenyltransferase ltmE is required for C20- and C21-prenylations of the indole ring of paspalanes and acts together with the cytochrome P450 monooxygenase ltmJ to yield lolitremanes by multiple oxidations and ring closures. The stereoisomer pairs of lolitriol and lolitrem N or lolitrem B and lolitrem F may be attributed to variations in the way in which ring closure can occur under the action of ltmJ. While the major product of this pathway is lolitrem B, the prenyl transferases and cytochrome P450 monooxygenases identified in this pathway have a remarkable versatility in their regio- and stereo-specificities to generate a diverse range of metabolites that are products of a metabolic grid rather than a linear pathway. The chain is Cytochrome P450 monooxygenase ltmJ (ltmJ) from Epichloe festucae var. lolii (Neotyphodium lolii).